The sequence spans 89 residues: Translation initiation factor IF-1 1 (89 aa).

The region spanning 1–73 (MSNKEQLIEM…TKGRITFRHL (73 aa)) is the S1-like domain.

The protein belongs to the IF-1 family. Component of the 30S ribosomal translation pre-initiation complex which assembles on the 30S ribosome in the order IF-2 and IF-3, IF-1 and N-formylmethionyl-tRNA(fMet); mRNA recruitment can occur at any time during PIC assembly.

It localises to the cytoplasm. In terms of biological role, one of the essential components for the initiation of protein synthesis. Stabilizes the binding of IF-2 and IF-3 on the 30S subunit to which N-formylmethionyl-tRNA(fMet) subsequently binds. Helps modulate mRNA selection, yielding the 30S pre-initiation complex (PIC). Upon addition of the 50S ribosomal subunit IF-1, IF-2 and IF-3 are released leaving the mature 70S translation initiation complex. The polypeptide is Translation initiation factor IF-1 1 (Acidovorax sp. (strain JS42)).